An 85-amino-acid polypeptide reads, in one-letter code: MTNDANIRLECLKPAERWAQPSGEEVREVLRLAGLTGGKAAKVLGLGPKGDRTIRRWVGEDTPIPYAAWALLCDYAGLGLIWKEV.

The segment at residues 28-47 (EVLRLAGLTGGKAAKVLGLG) is a DNA-binding region (H-T-H motif).

Acts with KorA as corepressor in the control of the kilC and kilE operons. This is Transcriptional repressor protein KorC (korC) from Escherichia coli.